The chain runs to 927 residues: DIS3-like exonuclease 2 (927 aa).

Over residues 1–12 (MDLKPNIRRKEK) the composition is skewed to basic residues. The tract at residues 1–168 (MDLKPNIRRK…DTNNATEMVS (168 aa)) is disordered. Positions 13–31 (RNLLKGEAALEKKGSIDRK) are enriched in basic and acidic residues. The span at 97-106 (VKPKAKKKNS) shows a compositional bias: basic residues. A compositionally biased stretch (basic and acidic residues) spans 107 to 152 (KEKISKSSKQDEHKTDVHKESVSKLSKNLESRNNRDENSAKREKNN). Over residues 153–168 (SHQVEADTNNATEMVS) the composition is skewed to polar residues. The Mg(2+) site is built by aspartate 453 and aspartate 462.

Belongs to the RNR ribonuclease family. DIS3L2 subfamily. Mg(2+) serves as cofactor. Mn(2+) is required as a cofactor.

Its subcellular location is the cytoplasm. It is found in the P-body. Its function is as follows. 3'-5'-exoribonuclease that specifically recognizes RNAs polyuridylated at their 3' end and mediates their degradation. Component of an exosome-independent RNA degradation pathway that mediates degradation of cytoplasmic mRNAs that have been deadenylated and subsequently uridylated at their 3'. This Schizosaccharomyces pombe (strain 972 / ATCC 24843) (Fission yeast) protein is DIS3-like exonuclease 2 (dis32).